Reading from the N-terminus, the 137-residue chain is Large ribosomal subunit protein uL13 (137 aa).

This sequence belongs to the universal ribosomal protein uL13 family. As to quaternary structure, part of the 50S ribosomal subunit.

This protein is one of the early assembly proteins of the 50S ribosomal subunit, although it is not seen to bind rRNA by itself. It is important during the early stages of 50S assembly. The chain is Large ribosomal subunit protein uL13 from Methanococcus maripaludis (strain DSM 14266 / JCM 13030 / NBRC 101832 / S2 / LL).